The sequence spans 217 residues: MTPEEQAAHQELIEQARLLFAGRVEFLKSAPALKFLPDPDVPEIAFAGRSNVGKSSLLNALTGRKSLARTSVTPGRTQELNYFEVGEPTRLRLVDMPGYGFAKAPPKVVETWRRLVRDFLRGRVVLKRTLLLIDSRHGVKPVDDDMMQMLDEAGVGYRIVLTKADKIKASELEKVTAETIAAARKRTAAYPEIIVTSSEKKMGIEELRAAVLQDAMG.

The EngB-type G domain occupies 40–217; that stretch reads DVPEIAFAGR…RAAVLQDAMG (178 aa). Residues 48 to 55, 75 to 79, 95 to 98, 162 to 165, and 196 to 198 contribute to the GTP site; these read GRSNVGKS, GRTQE, DMPG, TKAD, and TSS. Mg(2+) contacts are provided by Ser55 and Thr77.

Belongs to the TRAFAC class TrmE-Era-EngA-EngB-Septin-like GTPase superfamily. EngB GTPase family. The cofactor is Mg(2+).

Necessary for normal cell division and for the maintenance of normal septation. The polypeptide is Probable GTP-binding protein EngB (Novosphingobium aromaticivorans (strain ATCC 700278 / DSM 12444 / CCUG 56034 / CIP 105152 / NBRC 16084 / F199)).